The sequence spans 259 residues: Insulin-like growth factor-binding protein 4 (259 aa).

Residues 1–22 (MLPLCLVAALLLSASGPRPSLG) form the signal peptide. One can recognise an IGFBP N-terminal domain in the interval 24-104 (EAIHCPPCSE…MHGQGLCMEL (81 aa)). Disulfide bonds link cysteine 28–cysteine 54, cysteine 31–cysteine 56, cysteine 39–cysteine 57, cysteine 45–cysteine 60, cysteine 68–cysteine 81, and cysteine 75–cysteine 101. Residues 115-136 (QPSDKDEGDHPNNSFSPCSPQD) form a disordered region. A glycan (N-linked (GlcNAc...) asparagine) is linked at asparagine 126. 4 disulfide bridges follow: cysteine 132-cysteine 139, cysteine 175-cysteine 205, cysteine 216-cysteine 227, and cysteine 229-cysteine 250. In terms of domain architecture, Thyroglobulin type-1 spans 172 to 250 (QGSCQSELHR…GLEPKGELDC (79 aa)). Serine 256 bears the Phosphoserine mark.

As to quaternary structure, binds IGF2 more than IGF1.

The protein resides in the secreted. IGF-binding proteins prolong the half-life of the IGFs and have been shown to either inhibit or stimulate the growth promoting effects of the IGFs on cell culture. They alter the interaction of IGFs with their cell surface receptors. The chain is Insulin-like growth factor-binding protein 4 (IGFBP4) from Sus scrofa (Pig).